The following is a 502-amino-acid chain: Probable glycine dehydrogenase (decarboxylating) subunit 2 (502 aa).

At Lys-273 the chain carries N6-(pyridoxal phosphate)lysine.

This sequence belongs to the GcvP family. C-terminal subunit subfamily. The glycine cleavage system is composed of four proteins: P, T, L and H. In this organism, the P 'protein' is a heterodimer of two subunits. Pyridoxal 5'-phosphate serves as cofactor.

The enzyme catalyses N(6)-[(R)-lipoyl]-L-lysyl-[glycine-cleavage complex H protein] + glycine + H(+) = N(6)-[(R)-S(8)-aminomethyldihydrolipoyl]-L-lysyl-[glycine-cleavage complex H protein] + CO2. Functionally, the glycine cleavage system catalyzes the degradation of glycine. The P protein binds the alpha-amino group of glycine through its pyridoxal phosphate cofactor; CO(2) is released and the remaining methylamine moiety is then transferred to the lipoamide cofactor of the H protein. The sequence is that of Probable glycine dehydrogenase (decarboxylating) subunit 2 from Thermococcus kodakarensis (strain ATCC BAA-918 / JCM 12380 / KOD1) (Pyrococcus kodakaraensis (strain KOD1)).